The chain runs to 237 residues: Protein ULTRAPETALA 1 (237 aa).

The SAND domain maps to 18-116; that stretch reads EELQEMSGVN…SKTVLLKYYN (99 aa). The CW-type zinc finger occupies 133–191; sequence VCHRDEFVGCNDCGKERRFRLRSRDECRLHHNAMGDPNWKCSDFPYDKITCEEEEERGS.

As to quaternary structure, interacts with HHO5. Associates with ATX1 for trimethylating 'Lys-4' on histone H3 (H3K4me3) at flower MADS box gene loci. As to expression, expressed at low levels in seedlings, roots, shoots, leaves, stems, inflorescences, pollen, flowers and siliques, with highest levels dividing tissues including inflorescence.

The protein resides in the cytoplasm. Its subcellular location is the nucleus. Putative transcription factor that acts as a key negative regulator of cell accumulation in shoot and floral meristems. Negatively regulates the size of the WUSCHEL (WUS)-expressing organizing center in inflorescence meristems. May act by down-regulating expression of WUS. Acts as an antirepressor that counteracts EMF1 action through modulation of trimethylated 'Lys-4' on histone H3 (H3K4me3) marks on target gene loci (including genes involved in salt stress response and flower development). Collaboratively with RBL and CYP40/SQN, influences floral meristem (FM) determinacy in an AGAMOUS and SUPERMAN-dependent manner, thus contributing to the floral developmental homeostasis. This chain is Protein ULTRAPETALA 1, found in Arabidopsis thaliana (Mouse-ear cress).